The following is a 351-amino-acid chain: Rhodopsin (351 aa).

The Extracellular segment spans residues 1–36 (MNGTEGQDFYVPMSNKTGVVRSPFEYPQYYLAEPWK). N-linked (GlcNAc...) asparagine glycosylation is found at asparagine 2 and asparagine 15. A helical transmembrane segment spans residues 37-61 (FSALAAYMFMLILLGFPVNFLTLYV). The Cytoplasmic portion of the chain corresponds to 62–73 (TIQHKKLRTPLN). A helical membrane pass occupies residues 74–96 (YILLNLVVADLFMVFGGFTTTMY). The Extracellular portion of the chain corresponds to 97 to 110 (TSMNGYFVFGVTGC). Cysteine 110 and cysteine 187 form a disulfide bridge. The chain crosses the membrane as a helical span at residues 111–133 (YIEGFFATLGGEIALWSLVVLAV). The 'Ionic lock' involved in activated form stabilization motif lies at 134–136 (ERY). Topologically, residues 134-152 (ERYVVVCKPMSNFRFGENH) are cytoplasmic. A helical transmembrane segment spans residues 153 to 173 (AIMGVAFSWIMAMACAAPPLF). The Extracellular segment spans residues 174–202 (GWSRYIPEGMQCSCGIDYYTLKPEINNES). A helical transmembrane segment spans residues 203–224 (FVIYMFVVHFMIPLAVIFFCYG). The Cytoplasmic portion of the chain corresponds to 225–252 (NLVCTVKEAAAQQQESATTQKAEKEVTR). A helical transmembrane segment spans residues 253–274 (MVIIMVIAFLICWVPYASVAFY). Over 275–286 (IFTNQGSDFGPI) the chain is Extracellular. Residues 287 to 308 (FMTIPAFFAKSSAIYNPVIYIV) traverse the membrane as a helical segment. Residue lysine 296 is modified to N6-(retinylidene)lysine. Residues 309 to 351 (MNKQFRNCMITTLCCGKNPLGDEDTSAGKTETSSVSTSQVSPA) lie on the Cytoplasmic side of the membrane. S-palmitoyl cysteine attachment occurs at residues cysteine 322 and cysteine 323. The disordered stretch occupies residues 331-351 (EDTSAGKTETSSVSTSQVSPA). Positions 340–351 (TSSVSTSQVSPA) are enriched in low complexity. Serine 341 carries the post-translational modification Phosphoserine; by RK and GRK7.

This sequence belongs to the G-protein coupled receptor 1 family. Opsin subfamily. Contains one covalently linked retinal chromophore. Upon light absorption, the covalently bound 11-cis-retinal is converted to all-trans-retinal. After hydrolysis of the Schiff base and release of the covalently bound all-trans-retinal, active rhodopsin is regenerated by binding of a fresh molecule of 11-cis-retinal.

It is found in the membrane. It localises to the cell projection. The protein resides in the cilium. The protein localises to the photoreceptor outer segment. Functionally, photoreceptor required for image-forming vision at low light intensity. Required for photoreceptor cell viability after birth. Light-induced isomerization of 11-cis to all-trans retinal triggers a conformational change that activates signaling via G-proteins. Subsequent receptor phosphorylation mediates displacement of the bound G-protein alpha subunit by arrestin and terminates signaling. This is Rhodopsin (RHO) from Gallus gallus (Chicken).